The sequence spans 179 residues: Large ribosomal subunit protein uL6 (179 aa).

The protein belongs to the universal ribosomal protein uL6 family. Part of the 50S ribosomal subunit.

Functionally, this protein binds to the 23S rRNA, and is important in its secondary structure. It is located near the subunit interface in the base of the L7/L12 stalk, and near the tRNA binding site of the peptidyltransferase center. The polypeptide is Large ribosomal subunit protein uL6 (Solidesulfovibrio magneticus (strain ATCC 700980 / DSM 13731 / RS-1) (Desulfovibrio magneticus)).